Here is a 1097-residue protein sequence, read N- to C-terminus: DNA-directed RNA polymerase subunit beta (1097 aa).

The disordered stretch occupies residues Gln-1072 to Asp-1097. Residues Arg-1077–Thr-1091 show a composition bias toward polar residues.

This sequence belongs to the RNA polymerase beta chain family. In terms of assembly, in cyanobacteria the RNAP catalytic core is composed of 2 alpha, 1 beta, 1 beta', 1 gamma and 1 omega subunit. When a sigma factor is associated with the core the holoenzyme is formed, which can initiate transcription.

It carries out the reaction RNA(n) + a ribonucleoside 5'-triphosphate = RNA(n+1) + diphosphate. In terms of biological role, DNA-dependent RNA polymerase catalyzes the transcription of DNA into RNA using the four ribonucleoside triphosphates as substrates. This Prochlorococcus marinus (strain MIT 9301) protein is DNA-directed RNA polymerase subunit beta.